The sequence spans 1172 residues: Lysylphosphatidylglycerol biosynthesis bifunctional protein LysX (1172 aa).

A disordered region spans residues 1-34; the sequence is MGLHLTVPGLRRDGRGVQSNSHDTSSKTTADISR. Residues 1 to 663 are phosphatidylglycerol lysyltransferase; sequence MGLHLTVPGL…LLHHDGSAPD (663 aa). Residues 17–31 show a composition bias toward polar residues; that stretch reads VQSNSHDTSSKTTAD. Transmembrane regions (helical) follow at residues 80 to 100, 122 to 142, 146 to 166, 177 to 197, 214 to 234, 272 to 292, and 612 to 632; these read VPAA…LASV, FPDT…ALTA, IAWL…AAEI, FGEN…VLGY, AVWL…VELF, AIFG…LFLS, and VIPR…LPFS. The segment at 664–1172 is lysine--tRNA ligase; sequence VSGLRQVGLT…TLPFPLAKPH (509 aa). The segment at residues 726 to 804 is a DNA-binding region (OB); it reads VSVSGRIMRI…SLIVSGWRLI (79 aa). Mg(2+) is bound by residues aspartate 1084 and glutamate 1091.

In the N-terminal section; belongs to the LPG synthetase family. It in the C-terminal section; belongs to the class-II aminoacyl-tRNA synthetase family. Requires Mg(2+) as cofactor.

The protein resides in the cell membrane. The catalysed reaction is tRNA(Lys) + L-lysine + ATP = L-lysyl-tRNA(Lys) + AMP + diphosphate. It catalyses the reaction L-lysyl-tRNA(Lys) + a 1,2-diacyl-sn-glycero-3-phospho-(1'-sn-glycerol) = a 1,2-diacyl-sn-glycero-3-phospho-1'-(3'-O-L-lysyl)-sn-glycerol + tRNA(Lys). Catalyzes the production of L-lysyl-tRNA(Lys)transfer and the transfer of a lysyl group from L-lysyl-tRNA(Lys) to membrane-bound phosphatidylglycerol (PG), which produces lysylphosphatidylglycerol (LPG), one of the components of the bacterial membrane with a positive net charge. LPG synthesis contributes to the resistance to cationic antimicrobial peptides (CAMPs) and likely protects M.tuberculosis against the CAMPs produced by competiting microorganisms (bacteriocins). In fact, the modification of anionic phosphatidylglycerol with positively charged L-lysine results in repulsion of the peptides. The sequence is that of Lysylphosphatidylglycerol biosynthesis bifunctional protein LysX (lysX) from Mycobacterium tuberculosis (strain F11).